The primary structure comprises 479 residues: UDP-N-acetylmuramate--L-alanine ligase (479 aa).

ATP is bound at residue 115 to 121 (GTHGKTT).

This sequence belongs to the MurCDEF family.

Its subcellular location is the cytoplasm. The enzyme catalyses UDP-N-acetyl-alpha-D-muramate + L-alanine + ATP = UDP-N-acetyl-alpha-D-muramoyl-L-alanine + ADP + phosphate + H(+). It functions in the pathway cell wall biogenesis; peptidoglycan biosynthesis. In terms of biological role, cell wall formation. This chain is UDP-N-acetylmuramate--L-alanine ligase, found in Acidiphilium cryptum (strain JF-5).